We begin with the raw amino-acid sequence, 320 residues long: Cytochrome f (320 aa).

The first 35 residues, 1–35 (MENRNTFSWVKEQITRSISVSIMIYVITRTSISNA), serve as a signal peptide directing secretion. Heme contacts are provided by Tyr-36, Cys-56, Cys-59, and His-60. The helical transmembrane segment at 286–306 (VQGLLFFFASVILAQVFLVLK) threads the bilayer.

The protein belongs to the cytochrome f family. The 4 large subunits of the cytochrome b6-f complex are cytochrome b6, subunit IV (17 kDa polypeptide, petD), cytochrome f and the Rieske protein, while the 4 small subunits are PetG, PetL, PetM and PetN. The complex functions as a dimer. Heme serves as cofactor.

It is found in the plastid. The protein resides in the chloroplast thylakoid membrane. Functionally, component of the cytochrome b6-f complex, which mediates electron transfer between photosystem II (PSII) and photosystem I (PSI), cyclic electron flow around PSI, and state transitions. This Hordeum vulgare (Barley) protein is Cytochrome f.